The sequence spans 383 residues: Chaperone protein DnaJ (383 aa).

Residues 5–70 (DYYELLGVEK…QKRAAYDRFG (66 aa)) form the J domain. A CR-type zinc finger spans residues 137–215 (GKTATVKVPS…CGGSGRTRKE (79 aa)). Positions 150, 153, 167, 170, 189, 192, 203, and 206 each coordinate Zn(2+). CXXCXGXG motif repeat units lie at residues 150–157 (CEDCKGTG), 167–174 (CSACHGHG), 189–196 (CPTCQGMG), and 203–210 (CRSCGGSG).

Belongs to the DnaJ family. Homodimer. It depends on Zn(2+) as a cofactor.

The protein localises to the cytoplasm. Functionally, participates actively in the response to hyperosmotic and heat shock by preventing the aggregation of stress-denatured proteins and by disaggregating proteins, also in an autonomous, DnaK-independent fashion. Unfolded proteins bind initially to DnaJ; upon interaction with the DnaJ-bound protein, DnaK hydrolyzes its bound ATP, resulting in the formation of a stable complex. GrpE releases ADP from DnaK; ATP binding to DnaK triggers the release of the substrate protein, thus completing the reaction cycle. Several rounds of ATP-dependent interactions between DnaJ, DnaK and GrpE are required for fully efficient folding. Also involved, together with DnaK and GrpE, in the DNA replication of plasmids through activation of initiation proteins. The sequence is that of Chaperone protein DnaJ from Paramagnetospirillum magneticum (strain ATCC 700264 / AMB-1) (Magnetospirillum magneticum).